A 1372-amino-acid polypeptide reads, in one-letter code: DNA-directed RNA polymerase subunit beta (1372 aa).

Belongs to the RNA polymerase beta chain family. In terms of assembly, the RNAP catalytic core consists of 2 alpha, 1 beta, 1 beta' and 1 omega subunit. When a sigma factor is associated with the core the holoenzyme is formed, which can initiate transcription.

The enzyme catalyses RNA(n) + a ribonucleoside 5'-triphosphate = RNA(n+1) + diphosphate. Its function is as follows. DNA-dependent RNA polymerase catalyzes the transcription of DNA into RNA using the four ribonucleoside triphosphates as substrates. The polypeptide is DNA-directed RNA polymerase subunit beta (Nitratidesulfovibrio vulgaris (strain DP4) (Desulfovibrio vulgaris)).